A 104-amino-acid chain; its full sequence is Large ribosomal subunit protein bL21 (104 aa).

This sequence belongs to the bacterial ribosomal protein bL21 family. In terms of assembly, part of the 50S ribosomal subunit. Contacts protein L20.

Its function is as follows. This protein binds to 23S rRNA in the presence of protein L20. This Thermodesulfovibrio yellowstonii (strain ATCC 51303 / DSM 11347 / YP87) protein is Large ribosomal subunit protein bL21.